A 375-amino-acid polypeptide reads, in one-letter code: Ribosomal RNA large subunit methyltransferase G (375 aa).

Belongs to the methyltransferase superfamily. RlmG family.

The protein resides in the cytoplasm. It carries out the reaction guanosine(1835) in 23S rRNA + S-adenosyl-L-methionine = N(2)-methylguanosine(1835) in 23S rRNA + S-adenosyl-L-homocysteine + H(+). Specifically methylates the guanine in position 1835 (m2G1835) of 23S rRNA. The chain is Ribosomal RNA large subunit methyltransferase G from Erwinia tasmaniensis (strain DSM 17950 / CFBP 7177 / CIP 109463 / NCPPB 4357 / Et1/99).